Consider the following 448-residue polypeptide: Probable glycine dehydrogenase (decarboxylating) subunit 1 (448 aa).

This sequence belongs to the GcvP family. N-terminal subunit subfamily. As to quaternary structure, the glycine cleavage system is composed of four proteins: P, T, L and H. In this organism, the P 'protein' is a heterodimer of two subunits.

It carries out the reaction N(6)-[(R)-lipoyl]-L-lysyl-[glycine-cleavage complex H protein] + glycine + H(+) = N(6)-[(R)-S(8)-aminomethyldihydrolipoyl]-L-lysyl-[glycine-cleavage complex H protein] + CO2. The glycine cleavage system catalyzes the degradation of glycine. The P protein binds the alpha-amino group of glycine through its pyridoxal phosphate cofactor; CO(2) is released and the remaining methylamine moiety is then transferred to the lipoamide cofactor of the H protein. The polypeptide is Probable glycine dehydrogenase (decarboxylating) subunit 1 (Bacillus velezensis (strain DSM 23117 / BGSC 10A6 / LMG 26770 / FZB42) (Bacillus amyloliquefaciens subsp. plantarum)).